The primary structure comprises 365 residues: MGNITTENSSLSCPIDHTIHQTLAPVVYVTVLVVGFPANCLSLYFGYLQIKARNELGVYLCNLTIADLFYICSLPFWLQYVLQHDDWSHGDLSCQVCGILLYENIYISVGFLCCISIDRYLAVAHPFRFHQFRTLKAAVGVSVLIWAKELLTSIYFLNHKEVIEDEDQHRVCFEHYPIQAWQRSINYYRFLVGFLFPICLLLASYQGILRAVRRSHGTQKSRKDQIQRLVLSTVVIFLACFLPYHVLLLVRSLWERNCEFAKSIFNVYHFSLLLTSFNCVADPVLYCFVSETTHRDLARLRGACLAVLTCSRTSRAREAYPLGAPEASGKSGAQGEEPELLTKLHSAFQTPSSLGVGGPSTVGLA.

Residues 1–12 are Extracellular-facing; that stretch reads MGNITTENSSLS. Residues asparagine 3 and asparagine 8 are each glycosylated (N-linked (GlcNAc...) asparagine). The helical transmembrane segment at 13-49 threads the bilayer; it reads CPIDHTIHQTLAPVVYVTVLVVGFPANCLSLYFGYLQ. Cystine bridges form between cysteine 13–cysteine 258 and cysteine 94–cysteine 172. At 50–53 the chain is on the cytoplasmic side; it reads IKAR. Residues 54 to 84 traverse the membrane as a helical segment; sequence NELGVYLCNLTIADLFYICSLPFWLQYVLQH. The Extracellular portion of the chain corresponds to 85-89; the sequence is DDWSH. The chain crosses the membrane as a helical span at residues 90-125; sequence GDLSCQVCGILLYENIYISVGFLCCISIDRYLAVAH. The Cytoplasmic segment spans residues 126 to 133; the sequence is PFRFHQFR. The helical transmembrane segment at 134 to 160 threads the bilayer; that stretch reads TLKAAVGVSVLIWAKELLTSIYFLNHK. The Extracellular segment spans residues 161–176; sequence EVIEDEDQHRVCFEHY. The extracellular loop 2 (ECL2) stretch occupies residues 161 to 176; that stretch reads EVIEDEDQHRVCFEHY. A helical membrane pass occupies residues 177-214; the sequence is PIQAWQRSINYYRFLVGFLFPICLLLASYQGILRAVRR. At 215 to 218 the chain is on the cytoplasmic side; it reads SHGT. Residues 219–254 form a helical membrane-spanning segment; it reads QKSRKDQIQRLVLSTVVIFLACFLPYHVLLLVRSLW. Residues 255–260 are Extracellular-facing; it reads ERNCEF. The helical transmembrane segment at 261 to 289 threads the bilayer; it reads AKSIFNVYHFSLLLTSFNCVADPVLYCFV. Residues 290 to 365 lie on the Cytoplasmic side of the membrane; that stretch reads SETTHRDLAR…VGGPSTVGLA (76 aa).

It belongs to the G-protein coupled receptor 1 family. Expressed in the lung, testis, heart, brain, spleen, thymus, brown fat, small intestine, colon, peripheral blood leukocytes, macrophages, stomach, ovary and white fat but not in the liver, kidney, and skeletal muscle. Expression in the prostate is weak but detectable. Specifically expressed in endothelial cells of small-diameter resistance arteries.

The protein resides in the cell membrane. With respect to regulation, activated by a network of residues that connects an extracellular-facing cavity to Glu-149, a conserved charged residue buried in the transmembrane core of the receptor. Protonation likely drives conformational changes in extracellular loop 2 (ECL2), which stabilizes movement of transmembrane 3 (TM3) and a series of rearrangements that connect the extracellular-facing cavity to Glu-149, a residue only conserved in proton-sensing G-protein coupled receptors. Activated in an allosteric manner by divalent metal ions at the extracellular surface following the order: Cd(2+) &gt; Co(2+) &gt; Ni(2+) &gt; Zn(2+) &gt; Fe(2+) &gt; Ca(2+) &gt; Mg(2+). Activated by ogerin (ZINC67740571), a selective GPR68 positive allosteric modulator. Inhibited by small molecule GPR68-I, decreasing inflammation in models of colitis. In terms of biological role, proton-sensing G-protein coupled receptor activated by extracellular pH, which is required to monitor pH changes and generate adaptive reactions. The receptor is almost silent at pH 7.8 but fully activated at pH 6.8. Ligand binding causes a conformation change that triggers signaling via guanine nucleotide-binding proteins (G proteins) and modulates the activity of downstream effectors, such as phospholipase C. GPR68 is mainly coupled to G(q) G proteins and mediates production of diacylglycerol (DAG) and inositol 1,4,5-trisphosphate (IP3). Acts as a key mechanosensor of fluid shear stress and membrane stretch. Expressed in endothelial cells of small-diameter resistance arteries, where it mediates flow-induced dilation in response to shear stress. May represents an osteoblastic pH sensor regulating cell-mediated responses to acidosis in bone. Acts as a regulator of calcium-sensing receptor CASR in a seesaw manner: GPR68-mediated signaling inhibits CASR signaling in response to protons, while CASR inhibits GPR68 in presence of extracellular calcium. Also functions as a metastasis suppressor gene in prostate cancer. The sequence is that of G-protein coupled receptor 68 from Mus musculus (Mouse).